A 34-amino-acid polypeptide reads, in one-letter code: Thermomycolin (34 aa).

Serine 33 (charge relay system) is an active-site residue.

This sequence belongs to the peptidase S8 family.

Its subcellular location is the secreted. It catalyses the reaction Rather non-specific hydrolysis of proteins. Preferential cleavage: -Ala-|-Xaa-, -Tyr-|-Xaa-, -Phe-|-Xaa- in small molecular substrates.. In terms of biological role, this is an extracellular proteinase with a general specificity for apolar residues. In Malbranchea cinnamomea (Thermophilic fungus), this protein is Thermomycolin.